A 51-amino-acid polypeptide reads, in one-letter code: Protein SspM (51 aa).

This sequence belongs to the alpha/beta-type SASP family.

This is Protein SspM (sspM) from Mycolicibacterium phlei (Mycobacterium phlei).